Reading from the N-terminus, the 784-residue chain is Transcription factor kayak (784 aa).

Low complexity-rich tracts occupy residues Gln-97–Gln-106, Asn-115–Met-126, and Gln-198–Gln-227. Disordered regions lie at residues Gln-97–Met-126, Tyr-196–Thr-231, Pro-358–Ser-404, and Ser-421–Ile-464. The segment covering Ser-365–Gln-378 has biased composition (polar residues). Positions Thr-380–Gly-397 are enriched in low complexity. Positions Ser-421–Thr-438 are enriched in polar residues. One can recognise a bZIP domain in the interval Glu-459–His-522. The basic motif stretch occupies residues Lys-461 to Arg-463. The leucine-zipper stretch occupies residues Ile-464 to Leu-471. Phosphoserine is present on Ser-594. 2 disordered regions span residues Gln-616–Lys-635 and Pro-759–Leu-784.

This sequence belongs to the bZIP family. Fos subfamily. As to quaternary structure, homodimer. Heterodimer with Jra. The kay-Jra heterodimer binds more stably to the AP-1 site than either of the two proteins alone.

Its subcellular location is the nucleus. Developmentally regulated transcription factor AP-1 binds and recognizes the enhancer DNA sequence: 5'-TGA[CG]TCA-3'. May play a role in the function or determination of a particular subset of cells in the developing embryo. It is able to carry out its function either independently of or in conjunction with Jra. In Drosophila mojavensis (Fruit fly), this protein is Transcription factor kayak.